A 450-amino-acid chain; its full sequence is NADP-specific glutamate dehydrogenase (450 aa).

Residue Lys111 is part of the active site.

It belongs to the Glu/Leu/Phe/Val dehydrogenases family. As to quaternary structure, homohexamer.

It catalyses the reaction L-glutamate + NADP(+) + H2O = 2-oxoglutarate + NH4(+) + NADPH + H(+). The protein is NADP-specific glutamate dehydrogenase (GDHA) of Laccaria bicolor (strain S238N-H82 / ATCC MYA-4686) (Bicoloured deceiver).